The following is a 90-amino-acid chain: Phosphocarrier protein HPr (90 aa).

The HPr domain occupies 1 to 89 (MPAREITIIN…ELINNFFDEG (89 aa)). Residue His15 is the Pros-phosphohistidine intermediate of the active site.

Belongs to the HPr family.

The protein resides in the cytoplasm. Its function is as follows. General (non sugar-specific) component of the phosphoenolpyruvate-dependent sugar phosphotransferase system (sugar PTS). This major carbohydrate active-transport system catalyzes the phosphorylation of incoming sugar substrates concomitantly with their translocation across the cell membrane. The phosphoryl group from phosphoenolpyruvate (PEP) is transferred to the phosphoryl carrier protein HPr by enzyme I. Phospho-HPr then transfers it to the PTS EIIA domain. The polypeptide is Phosphocarrier protein HPr (ptsH) (Pseudomonas putida (Arthrobacter siderocapsulatus)).